A 448-amino-acid polypeptide reads, in one-letter code: METKGRRSAAVLDQQDESEAHPRKRPTRRAPLHRDGNNPDSDAATMEGSDPGSAGRPSSDSLLQEPSQPAKRGGLLDRDAIEHITELWDRLELLQQTLSKMPMADGLKPLKNFSSLQELLSLGGERLLTDLVRENIHVREMMNEVAPLLREDGSCRSLNYHLQPVIGVIYGPTGCGKSQLLRNLLSSQLITPAPETVFFIAPQVDMIPPSELKAWEMQICEGNYAPGPQGTFIPQSGTLRPKFIKMAYDDLTQEHNYDVSDPRNVFARAAAHGPIAIIMDECMENLGGHKGVSKFFHAFPSKLHDKFPKCTGYTVLVVLHNMNPRRDLGGNIANLKIQSKMHIISPRMHPSQLNRFVNTYTKGLPVAISLLLKDIVQHHALRPCYDWVIYNTTPEQEALQWSHLHPRDGLMPMYLNIQSHLYRVLEKIHRVLNDRNRWSRAYRARKIK.

Positions 1–76 (METKGRRSAA…SQPAKRGGLL (76 aa)) are disordered. The segment covering 22–31 (PRKRPTRRAP) has biased composition (basic residues). A compositionally biased stretch (polar residues) spans 56-67 (RPSSDSLLQEPS). Residue 171-178 (GPTGCGKS) coordinates ATP. Residues 440-448 (RAYRARKIK) form a DNA-binding region.

The protein belongs to the adenoviridae packaging protein 1 family. Homodimer. Part of a genome packaging complex composed of packaging proteins 1, 2 and 3; this complex specifically binds to the packaging sequence on the left end of viral genomic DNA and performs packaging of the viral genome. Interacts with protein 33K.

The protein resides in the virion. It is found in the host nucleus. It localises to the host nucleoplasm. The protein localises to the host nucleolus. Functionally, component of the packaging machinery which encapsidates the viral DNA into preformed capsids and transcriptional activator of the viral major late promoter (MLP). Binds, along with packaging proteins 2 and 3, to the specific packaging sequence on the left end of viral genomic DNA and displays ATPase activity thereby providing the power stroke of the packaging machinery. The activity of packaging protein IVa2 is stimulated by protein 33K which acts as a terminase. May be the protein that pumps DNA into the capsid powered by ATP hydrolysis. Specifically binds to the 5'-CG-3' nucleotides of the repeats making up the packaging sequence. Component of the DEF-A and DEF-B transcription factors that bind downstream elements of the major late promoter (MLP), and stimulate transcription from the MLP after initiation of viral DNA replication. DEF-A is a heterodimer packaging proteins 1 and 2 and DEF-B is a homodimer of packaging protein 1. The protein is Packaging protein 1 of Human adenovirus B serotype 7 (HAdV-7).